Here is a 359-residue protein sequence, read N- to C-terminus: Peptide chain release factor 1 (359 aa).

Glutamine 236 is subject to N5-methylglutamine.

It belongs to the prokaryotic/mitochondrial release factor family. Methylated by PrmC. Methylation increases the termination efficiency of RF1.

Its subcellular location is the cytoplasm. Functionally, peptide chain release factor 1 directs the termination of translation in response to the peptide chain termination codons UAG and UAA. The protein is Peptide chain release factor 1 (prfA) of Mycoplasma pneumoniae (strain ATCC 29342 / M129 / Subtype 1) (Mycoplasmoides pneumoniae).